A 1849-amino-acid chain; its full sequence is Protein TANC1 (1849 aa).

At M1 the chain carries N-acetylmethionine. Disordered stretches follow at residues 1 to 47 (MLKA…TTED) and 59 to 109 (MSLP…FREG). Basic and acidic residues predominate over residues 8–21 (KSREGVKGSKKEAG). A compositionally biased stretch (polar residues) spans 27 to 46 (ETPTLSSSGDSPVNSLSTTE). Phosphoserine is present on residues S60, S63, S64, S204, S267, and S455. Disordered stretches follow at residues 264 to 309 (DNCS…PRPN) and 430 to 481 (VASS…QRPR). Over residues 451–468 (TPLLSPSSSTSALSAART) the composition is skewed to low complexity. ANK repeat units follow at residues 886–918 (EGLSAALASLRNLYTPNVKVSRLLILGGANVNY), 924–953 (NNAPILCVQSHLGHEEVVTLLLEFGACLDG), 957–986 (NGMNALCYAAAAGHMKLVCLLTKKGARVDH), 990–1019 (KGQCALVHSALRGHSDILQYLLNCEWSAGP), 1030–1059 (ALQQALTAAASMGHSAVVQSLLGMAEEHEI), 1068–1097 (WGETALTAAAGRGKLEICELLLERGAAVSR), 1101–1130 (RGVPPLFCAARQGHWQVVQLLLDRGCDVNP), 1134–1163 (QGRTPLMVAACEGHLSTVEFLLSKGAALSS), 1167–1196 (EGLSALSWACLKGHRAVVQYLVEEGAEIDQ), 1200–1229 (NGRTPLDLAAFYGDAETVLYLVEKGAVIEH), and 1233–1262 (SGMRPLDRAIGCRNTAVVVTLLRKGAKLGN). 3 TPR repeats span residues 1279–1312 (LQKLMEEGNVMYKKGKMKEAAQRYQYALRKFPRE), 1326–1359 (VSLYLNLSRCRRKTNDFGLAEEFASKALELKPKS), and 1361–1393 (EAFYARARAKRNSRQFLAALADLQEAVKLCPTN). The span at 1410 to 1421 (LQRNQQQKQQAP) shows a compositional bias: low complexity. Disordered regions lie at residues 1410 to 1503 (LQRN…ISKS), 1527 to 1605 (NQHL…GESG), 1635 to 1711 (QGGP…PRNT), and 1812 to 1849 (PHLYPEGVSKQPLHVSTEAHRSHLTSAKPKRSFIESNV). S1429 and S1456 each carry phosphoserine. Acidic residues predominate over residues 1447–1456 (EEAEEEDTSS). Polar residues-rich tracts occupy residues 1527–1546 (NQHLGSGQSSMRNSNTKVQV) and 1593–1603 (PSQSLQLQRGE). The segment covering 1649-1679 (SLSSSGSSGSPSSSVKMSSSTSSLTSSSSVS) has biased composition (low complexity). 3 positions are modified to phosphoserine: S1658, S1666, and S1667.

Belongs to the TANC family. Interacts probably directly with DLG1, DLG4, HOMER1. Interacts with DLGAP1, INA, CAMK2A, GRIN2B and GRIA1. Interacts with TNIK and MINK1. Post-translationally, phosphorylated; by MINK1 and TNIK upon stimulation by RAP2A. In terms of tissue distribution, expressed in heart, lung, liver and kidney. Expressed in brain (at protein level).

It is found in the postsynaptic density. Functionally, may be a scaffold component in the postsynaptic density. The sequence is that of Protein TANC1 (Tanc1) from Rattus norvegicus (Rat).